The following is a 705-amino-acid chain: Fatty acid oxidation complex subunit alpha (705 aa).

The interval 1–188 (MGKTFNLTRR…KMGLVNDVVP (188 aa)) is enoyl-CoA hydratase. A 3-hydroxyacyl-CoA dehydrogenase region spans residues 308 to 705 (RKVKKAVILG…AMAAEKARFF (398 aa)).

It in the N-terminal section; belongs to the enoyl-CoA hydratase/isomerase family. The protein in the central section; belongs to the 3-hydroxyacyl-CoA dehydrogenase family. Heterotetramer of two alpha chains (FadJ) and two beta chains (FadI).

Its subcellular location is the cytoplasm. The enzyme catalyses a (3S)-3-hydroxyacyl-CoA = a (2E)-enoyl-CoA + H2O. The catalysed reaction is a 4-saturated-(3S)-3-hydroxyacyl-CoA = a (3E)-enoyl-CoA + H2O. It catalyses the reaction a (3S)-3-hydroxyacyl-CoA + NAD(+) = a 3-oxoacyl-CoA + NADH + H(+). It carries out the reaction (3S)-3-hydroxybutanoyl-CoA = (3R)-3-hydroxybutanoyl-CoA. The protein operates within lipid metabolism; fatty acid beta-oxidation. In terms of biological role, catalyzes the formation of a hydroxyacyl-CoA by addition of water on enoyl-CoA. Also exhibits 3-hydroxyacyl-CoA epimerase and 3-hydroxyacyl-CoA dehydrogenase activities. The protein is Fatty acid oxidation complex subunit alpha of Shewanella oneidensis (strain ATCC 700550 / JCM 31522 / CIP 106686 / LMG 19005 / NCIMB 14063 / MR-1).